The primary structure comprises 411 residues: Snake venom metalloproteinase VMP1 (411 aa).

Positions 1 to 20 (MIQVLLVTICLAAFPYQGSS) are cleaved as a signal peptide. The propeptide occupies 21–189 (IILESGNVND…KKAFQLNLTP (169 aa)). One can recognise a Peptidase M12B domain in the interval 197 to 393 (RYVELVIIAD…KNPQCILNKP (197 aa)). Residues glutamate 200 and aspartate 284 each contribute to the Ca(2+) site. Cystine bridges form between cysteine 308-cysteine 388, cysteine 348-cysteine 372, and cysteine 350-cysteine 355. The N-linked (GlcNAc...) asparagine glycan is linked to asparagine 311. Histidine 333 is a binding site for Zn(2+). Glutamate 334 is a catalytic residue. Zn(2+) is bound by residues histidine 337 and histidine 343. Ca(2+)-binding residues include cysteine 388, asparagine 391, valine 403, asparagine 406, leucine 408, and glutamate 410.

This sequence belongs to the venom metalloproteinase (M12B) family. P-I subfamily. Monomer. Zn(2+) serves as cofactor. As to expression, expressed by the venom gland.

The protein localises to the secreted. Its activity is regulated as follows. Inhibited by EDTA and 1,10-phenanthroline, but not by PMSF. Its function is as follows. This venom zinc protease has fibrinolytic activity. The recombinant enzyme cleaves both alpha- (FGA) and beta-chains (FGB) of fibrinogen, but not the gamma-chain. The recombinant protein does not produce hemorrhage in mice and does not have effect on ADP- or collagen-stimulated platelet aggregation. This Agkistrodon piscivorus leucostoma (Western cottonmouth) protein is Snake venom metalloproteinase VMP1.